The primary structure comprises 321 residues: tRNA-dihydrouridine synthase B (321 aa).

FMN-binding positions include 16-18 and Q70; that span reads PMA. C100 functions as the Proton donor in the catalytic mechanism. FMN is bound by residues K139, 200-202, and 224-225; these read NGD and GR.

Belongs to the Dus family. DusB subfamily. It depends on FMN as a cofactor.

It catalyses the reaction a 5,6-dihydrouridine in tRNA + NAD(+) = a uridine in tRNA + NADH + H(+). It carries out the reaction a 5,6-dihydrouridine in tRNA + NADP(+) = a uridine in tRNA + NADPH + H(+). Its function is as follows. Catalyzes the synthesis of 5,6-dihydrouridine (D), a modified base found in the D-loop of most tRNAs, via the reduction of the C5-C6 double bond in target uridines. This chain is tRNA-dihydrouridine synthase B, found in Shigella flexneri.